A 626-amino-acid chain; its full sequence is Probable potassium transport system protein Kup (626 aa).

The next 12 helical transmembrane spans lie at 11 to 31, 55 to 75, 103 to 123, 140 to 160, 171 to 191, 216 to 236, 250 to 270, 282 to 302, 340 to 360, 369 to 389, 395 to 415, and 422 to 442; these read FLTL…TSPL, LSLI…VFVM, AWII…GMIT, AALS…LFLI, LFGP…FVSL, LGFA…ALYA, WFAV…ALLI, LLVP…ATVI, IYAP…VLAF, AYGL…LVVA, WPGL…LSFL, and LGDG…VMST.

It belongs to the HAK/KUP transporter (TC 2.A.72) family.

It is found in the cell inner membrane. It catalyses the reaction K(+)(in) + H(+)(in) = K(+)(out) + H(+)(out). In terms of biological role, transport of potassium into the cell. Likely operates as a K(+):H(+) symporter. The chain is Probable potassium transport system protein Kup from Methylococcus capsulatus (strain ATCC 33009 / NCIMB 11132 / Bath).